Reading from the N-terminus, the 253-residue chain is Tyrosine recombinase XerD-like (253 aa).

One can recognise a Core-binding (CB) domain in the interval 8–81 (KQLTTQITNF…AVNQFLLYLY (74 aa)). The Tyr recombinase domain occupies 93–253 (SETAPLPSQQ…PVTLEKYYKT (161 aa)). Residues K157 and R218 contribute to the active site. Y250 (O-(3'-phospho-DNA)-tyrosine intermediate) is an active-site residue.

Belongs to the 'phage' integrase family. XerD-like subfamily.

It localises to the cytoplasm. Its function is as follows. Putative tyrosine recombinase. Not involved in the cutting and rejoining of the recombining DNA molecules on dif(SL) site. The sequence is that of Tyrosine recombinase XerD-like from Streptococcus thermophilus (strain CNRZ 1066).